Here is a 284-residue protein sequence, read N- to C-terminus: Protoheme IX farnesyltransferase (284 aa).

A run of 9 helical transmembrane segments spans residues 2–19, 23–45, 69–89, 92–112, 121–141, 148–168, 194–214, 217–237, and 263–283; these read SLVVFTALVGLLVAPVTV, IALTGILFIALGAGASGALNMWS, GEALGIGLALSGIAVVMLGLA, LFAAGLLAFTIFFYAVVYSMW, IVIGGAAGAFPPMIGWAVATG, LFMFALIFMWTPPHFWSLALF, VLVYSLLLAPLAVAGAFTGTG, LYLATALALNGWLLVGAVRTW, and LFLHFGAILAEAALKPYGLGG.

This sequence belongs to the UbiA prenyltransferase family. Protoheme IX farnesyltransferase subfamily. In terms of assembly, interacts with CtaA.

The protein resides in the cell inner membrane. The catalysed reaction is heme b + (2E,6E)-farnesyl diphosphate + H2O = Fe(II)-heme o + diphosphate. Its pathway is porphyrin-containing compound metabolism; heme O biosynthesis; heme O from protoheme: step 1/1. In terms of biological role, converts heme B (protoheme IX) to heme O by substitution of the vinyl group on carbon 2 of heme B porphyrin ring with a hydroxyethyl farnesyl side group. This Cereibacter sphaeroides (Rhodobacter sphaeroides) protein is Protoheme IX farnesyltransferase.